The sequence spans 104 residues: ATP synthase subunit c (104 aa).

2 consecutive transmembrane segments (helical) span residues Leu37–Val57 and Ala83–Val103.

It belongs to the ATPase C chain family. In terms of assembly, F-type ATPases have 2 components, F(1) - the catalytic core - and F(0) - the membrane proton channel. F(1) has five subunits: alpha(3), beta(3), gamma(1), delta(1), epsilon(1). F(0) has three main subunits: a(1), b(2) and c(10-14). The alpha and beta chains form an alternating ring which encloses part of the gamma chain. F(1) is attached to F(0) by a central stalk formed by the gamma and epsilon chains, while a peripheral stalk is formed by the delta and b chains.

The protein resides in the cell membrane. In terms of biological role, f(1)F(0) ATP synthase produces ATP from ADP in the presence of a proton or sodium gradient. F-type ATPases consist of two structural domains, F(1) containing the extramembraneous catalytic core and F(0) containing the membrane proton channel, linked together by a central stalk and a peripheral stalk. During catalysis, ATP synthesis in the catalytic domain of F(1) is coupled via a rotary mechanism of the central stalk subunits to proton translocation. Key component of the F(0) channel; it plays a direct role in translocation across the membrane. A homomeric c-ring of between 10-14 subunits forms the central stalk rotor element with the F(1) delta and epsilon subunits. The polypeptide is ATP synthase subunit c (Mesoplasma florum (strain ATCC 33453 / NBRC 100688 / NCTC 11704 / L1) (Acholeplasma florum)).